We begin with the raw amino-acid sequence, 70 residues long: Small ribosomal subunit protein bS21A (70 aa).

Belongs to the bacterial ribosomal protein bS21 family.

This Burkholderia orbicola (strain AU 1054) protein is Small ribosomal subunit protein bS21A.